The sequence spans 214 residues: Large ribosomal subunit protein uL16 (214 aa).

Arg32 carries the citrulline modification. Lys175 participates in a covalent cross-link: Glycyl lysine isopeptide (Lys-Gly) (interchain with G-Cter in SUMO2). A Glycyl lysine isopeptide (Lys-Gly) (interchain with G-Cter in ubiquitin) cross-link involves residue Lys188.

It belongs to the universal ribosomal protein uL16 family. In terms of assembly, component of the large ribosomal subunit. Mature ribosomes consist of a small (40S) and a large (60S) subunit. The 40S subunit contains about 33 different proteins and 1 molecule of RNA (18S). The 60S subunit contains about 49 different proteins and 3 molecules of RNA (28S, 5.8S and 5S). Citrullinated by PADI4. In terms of processing, ufmylated by UFL1.

It is found in the cytoplasm. In terms of biological role, component of the large ribosomal subunit. Plays a role in the formation of actively translating ribosomes. May play a role in the embryonic brain development. The chain is Large ribosomal subunit protein uL16 from Homo sapiens (Human).